A 265-amino-acid polypeptide reads, in one-letter code: Expansin-like A1 (265 aa).

An N-terminal signal peptide occupies residues 1 to 20 (MGSFLFLIVVIFLFSSSVNA). One can recognise an Expansin-like EG45 domain in the interval 41–147 (SGACAYGSMA…QRVPCDYGNK (107 aa)). A helical membrane pass occupies residues 42-62 (GACAYGSMATSFFAGHIAAAI). Asparagine 99 and asparagine 102 each carry an N-linked (GlcNAc...) asparagine glycan. The Expansin-like CBD domain maps to 161 to 244 (NYLEIKLLYQ…NWEAGKIYDA (84 aa)).

Belongs to the expansin family. Expansin-like A subfamily.

Its subcellular location is the membrane. The polypeptide is Expansin-like A1 (EXLA1) (Arabidopsis thaliana (Mouse-ear cress)).